The chain runs to 136 residues: Ribonuclease P protein component (136 aa).

Residues 116-136 (RPQRAAAKGSAGTTQKGTPRA) are disordered. Over residues 126–136 (AGTTQKGTPRA) the composition is skewed to polar residues.

This sequence belongs to the RnpA family. As to quaternary structure, consists of a catalytic RNA component (M1 or rnpB) and a protein subunit.

It carries out the reaction Endonucleolytic cleavage of RNA, removing 5'-extranucleotides from tRNA precursor.. In terms of biological role, RNaseP catalyzes the removal of the 5'-leader sequence from pre-tRNA to produce the mature 5'-terminus. It can also cleave other RNA substrates such as 4.5S RNA. The protein component plays an auxiliary but essential role in vivo by binding to the 5'-leader sequence and broadening the substrate specificity of the ribozyme. This Pseudarthrobacter chlorophenolicus (strain ATCC 700700 / DSM 12829 / CIP 107037 / JCM 12360 / KCTC 9906 / NCIMB 13794 / A6) (Arthrobacter chlorophenolicus) protein is Ribonuclease P protein component.